A 174-amino-acid chain; its full sequence is Adipose-secreted signaling protein (174 aa).

Ala-2 is subject to N-acetylalanine. Thr-147 is subject to Phosphothreonine.

Belongs to the ADISSP family. In terms of tissue distribution, expression is adipose-specific and highly brown adipose tissue-enriched.

It is found in the secreted. In terms of biological role, adipocyte-secreted protein (adipokine) that acts as a key regulator for white adipose tissue (WAT) thermogenesis and glucose homeostasis at least in part through activation of protein kinase A (PKA). The sequence is that of Adipose-secreted signaling protein from Mus musculus (Mouse).